A 404-amino-acid chain; its full sequence is Argininosuccinate synthase (404 aa).

ATP-binding positions include 11-19 (AYSGGLDTS) and A38. L-citrulline-binding residues include Y91 and S96. An ATP-binding site is contributed by G121. T123, N127, and D128 together coordinate L-aspartate. Position 127 (N127) interacts with L-citrulline. Residues R131, S181, S190, E266, and Y278 each contribute to the L-citrulline site.

It belongs to the argininosuccinate synthase family. Type 1 subfamily. Homotetramer.

The protein resides in the cytoplasm. It catalyses the reaction L-citrulline + L-aspartate + ATP = 2-(N(omega)-L-arginino)succinate + AMP + diphosphate + H(+). It functions in the pathway amino-acid biosynthesis; L-arginine biosynthesis; L-arginine from L-ornithine and carbamoyl phosphate: step 2/3. This chain is Argininosuccinate synthase, found in Sulfurimonas denitrificans (strain ATCC 33889 / DSM 1251) (Thiomicrospira denitrificans (strain ATCC 33889 / DSM 1251)).